Reading from the N-terminus, the 472-residue chain is GTPase Der (472 aa).

EngA-type G domains are found at residues 3–166 and 188–361; these read PIIA…IQNN and IKLA…HCST. Residues 9–16, 56–60, 118–121, 194–201, 241–245, and 306–309 each bind GTP; these read GRPNVGKS, DTGGI, NKID, GSSNVGKS, DTAGL, and NKWD. One can recognise a KH-like domain in the interval 362 to 446; sequence KRISTALLTK…PIRIQFNEPA (85 aa).

Belongs to the TRAFAC class TrmE-Era-EngA-EngB-Septin-like GTPase superfamily. EngA (Der) GTPase family. In terms of assembly, associates with the 50S ribosomal subunit.

Its function is as follows. GTPase that plays an essential role in the late steps of ribosome biogenesis. The protein is GTPase Der of Baumannia cicadellinicola subsp. Homalodisca coagulata.